The chain runs to 466 residues: Asparagine--tRNA ligase (466 aa).

This sequence belongs to the class-II aminoacyl-tRNA synthetase family. Homodimer.

It is found in the cytoplasm. The enzyme catalyses tRNA(Asn) + L-asparagine + ATP = L-asparaginyl-tRNA(Asn) + AMP + diphosphate + H(+). The protein is Asparagine--tRNA ligase of Shewanella halifaxensis (strain HAW-EB4).